Reading from the N-terminus, the 386-residue chain is Bifunctional enzyme IspD/IspF (386 aa).

The 2-C-methyl-D-erythritol 4-phosphate cytidylyltransferase stretch occupies residues 1 to 230 (MIRDERVAAI…RARSILEAPV (230 aa)). The interval 231–386 (AMGVGYDTHR…HAVALLVRVR (156 aa)) is 2-C-methyl-D-erythritol 2,4-cyclodiphosphate synthase. A divalent metal cation-binding residues include aspartate 237 and histidine 239. 4-CDP-2-C-methyl-D-erythritol 2-phosphate contacts are provided by residues 237–239 (DTH) and 262–263 (HS). An a divalent metal cation-binding site is contributed by histidine 270. 4-CDP-2-C-methyl-D-erythritol 2-phosphate is bound by residues 284-286 (DLG), 289-293 (FPDTD), 360-363 (TTGE), phenylalanine 367, and arginine 370.

The protein in the N-terminal section; belongs to the IspD/TarI cytidylyltransferase family. IspD subfamily. It in the C-terminal section; belongs to the IspF family. A divalent metal cation serves as cofactor.

It carries out the reaction 2-C-methyl-D-erythritol 4-phosphate + CTP + H(+) = 4-CDP-2-C-methyl-D-erythritol + diphosphate. It catalyses the reaction 4-CDP-2-C-methyl-D-erythritol 2-phosphate = 2-C-methyl-D-erythritol 2,4-cyclic diphosphate + CMP. It participates in isoprenoid biosynthesis; isopentenyl diphosphate biosynthesis via DXP pathway; isopentenyl diphosphate from 1-deoxy-D-xylulose 5-phosphate: step 2/6. The protein operates within isoprenoid biosynthesis; isopentenyl diphosphate biosynthesis via DXP pathway; isopentenyl diphosphate from 1-deoxy-D-xylulose 5-phosphate: step 4/6. Bifunctional enzyme that catalyzes the formation of 4-diphosphocytidyl-2-C-methyl-D-erythritol from CTP and 2-C-methyl-D-erythritol 4-phosphate (MEP) (IspD), and catalyzes the conversion of 4-diphosphocytidyl-2-C-methyl-D-erythritol 2-phosphate (CDP-ME2P) to 2-C-methyl-D-erythritol 2,4-cyclodiphosphate (ME-CPP) with a corresponding release of cytidine 5-monophosphate (CMP) (IspF). The chain is Bifunctional enzyme IspD/IspF from Anaeromyxobacter sp. (strain Fw109-5).